A 740-amino-acid polypeptide reads, in one-letter code: 1,4-alpha-glucan branching enzyme GlgB (740 aa).

Aspartate 409 functions as the Nucleophile in the catalytic mechanism. The active-site Proton donor is glutamate 462.

This sequence belongs to the glycosyl hydrolase 13 family. GlgB subfamily. In terms of assembly, monomer.

The enzyme catalyses Transfers a segment of a (1-&gt;4)-alpha-D-glucan chain to a primary hydroxy group in a similar glucan chain.. It participates in glycan biosynthesis; glycogen biosynthesis. Its function is as follows. Catalyzes the formation of the alpha-1,6-glucosidic linkages in glycogen by scission of a 1,4-alpha-linked oligosaccharide from growing alpha-1,4-glucan chains and the subsequent attachment of the oligosaccharide to the alpha-1,6 position. The chain is 1,4-alpha-glucan branching enzyme GlgB from Methylococcus capsulatus (strain ATCC 33009 / NCIMB 11132 / Bath).